The primary structure comprises 309 residues: Porphobilinogen deaminase (309 aa).

The residue at position 241 (C241) is an S-(dipyrrolylmethanemethyl)cysteine.

The protein belongs to the HMBS family. As to quaternary structure, monomer. The cofactor is dipyrromethane.

It catalyses the reaction 4 porphobilinogen + H2O = hydroxymethylbilane + 4 NH4(+). Its pathway is porphyrin-containing compound metabolism; protoporphyrin-IX biosynthesis; coproporphyrinogen-III from 5-aminolevulinate: step 2/4. Its function is as follows. Tetrapolymerization of the monopyrrole PBG into the hydroxymethylbilane pre-uroporphyrinogen in several discrete steps. The polypeptide is Porphobilinogen deaminase (Oceanobacillus iheyensis (strain DSM 14371 / CIP 107618 / JCM 11309 / KCTC 3954 / HTE831)).